We begin with the raw amino-acid sequence, 572 residues long: Proline--tRNA ligase (572 aa).

The protein belongs to the class-II aminoacyl-tRNA synthetase family. ProS type 1 subfamily. In terms of assembly, homodimer.

It is found in the cytoplasm. The catalysed reaction is tRNA(Pro) + L-proline + ATP = L-prolyl-tRNA(Pro) + AMP + diphosphate. Catalyzes the attachment of proline to tRNA(Pro) in a two-step reaction: proline is first activated by ATP to form Pro-AMP and then transferred to the acceptor end of tRNA(Pro). As ProRS can inadvertently accommodate and process non-cognate amino acids such as alanine and cysteine, to avoid such errors it has two additional distinct editing activities against alanine. One activity is designated as 'pretransfer' editing and involves the tRNA(Pro)-independent hydrolysis of activated Ala-AMP. The other activity is designated 'posttransfer' editing and involves deacylation of mischarged Ala-tRNA(Pro). The misacylated Cys-tRNA(Pro) is not edited by ProRS. The polypeptide is Proline--tRNA ligase (Leuconostoc mesenteroides subsp. mesenteroides (strain ATCC 8293 / DSM 20343 / BCRC 11652 / CCM 1803 / JCM 6124 / NCDO 523 / NBRC 100496 / NCIMB 8023 / NCTC 12954 / NRRL B-1118 / 37Y)).